The sequence spans 380 residues: Protein COS12 (380 aa).

Residues 1 to 70 (MDGAKFENTV…WKIRGKRHYL (70 aa)) lie on the Cytoplasmic side of the membrane. Residues 71–91 (VIVTALMFEVLYFLWTYSYIF) traverse the membrane as a helical segment. The Extracellular portion of the chain corresponds to 92-231 (RERTLGKQVS…KLLWAFKEVT (140 aa)). Residues 232–252 (IMNSRFAFFSIAYLNGLLTIP) form a helical membrane-spanning segment. The Cytoplasmic segment spans residues 253–257 (RLRNS). The chain crosses the membrane as a helical span at residues 258 to 278 (LHILYVCAVLSSMIIEYLIGI). Over 279–380 (DKFRFKSMNL…KEAQSACNDV (102 aa)) the chain is Extracellular.

It belongs to the DUP/COS family.

It localises to the membrane. The sequence is that of Protein COS12 (COS12) from Saccharomyces cerevisiae (strain ATCC 204508 / S288c) (Baker's yeast).